Reading from the N-terminus, the 863-residue chain is Bifunctional uridylyltransferase/uridylyl-removing enzyme (863 aa).

The interval 1–328 (MLFSPTLSSL…SSNQDTVIDQ (328 aa)) is uridylyltransferase. Positions 329-687 (LDDDFQLINQ…ISNRFSLGGT (359 aa)) are uridylyl-removing. One can recognise an HD domain in the interval 446–568 (VDEHTLRVML…MQNQVRLDYL (123 aa)). 2 ACT domains span residues 688-764 (EVFI…KLPA) and 794-863 (EMEL…QQIR).

It belongs to the GlnD family. Requires Mg(2+) as cofactor.

It catalyses the reaction [protein-PII]-L-tyrosine + UTP = [protein-PII]-uridylyl-L-tyrosine + diphosphate. It carries out the reaction [protein-PII]-uridylyl-L-tyrosine + H2O = [protein-PII]-L-tyrosine + UMP + H(+). With respect to regulation, uridylyltransferase (UTase) activity is inhibited by glutamine, while glutamine activates uridylyl-removing (UR) activity. Its function is as follows. Modifies, by uridylylation and deuridylylation, the PII regulatory proteins (GlnB and homologs), in response to the nitrogen status of the cell that GlnD senses through the glutamine level. Under low glutamine levels, catalyzes the conversion of the PII proteins and UTP to PII-UMP and PPi, while under higher glutamine levels, GlnD hydrolyzes PII-UMP to PII and UMP (deuridylylation). Thus, controls uridylylation state and activity of the PII proteins, and plays an important role in the regulation of nitrogen assimilation and metabolism. This is Bifunctional uridylyltransferase/uridylyl-removing enzyme from Haemophilus influenzae (strain ATCC 51907 / DSM 11121 / KW20 / Rd).